The chain runs to 208 residues: UPF0637 protein BcerKBAB4_3786 (208 aa).

The protein belongs to the UPF0637 family.

The chain is UPF0637 protein BcerKBAB4_3786 from Bacillus mycoides (strain KBAB4) (Bacillus weihenstephanensis).